Reading from the N-terminus, the 157-residue chain is Phosphopantetheine adenylyltransferase (157 aa).

Substrate is bound at residue S9. ATP-binding positions include 9–10 (SF) and H17. Residues K41, T73, and R87 each coordinate substrate. ATP contacts are provided by residues 88–90 (GIR), E98, and 122–128 (YQDISSS).

Belongs to the bacterial CoaD family. As to quaternary structure, homohexamer. It depends on Mg(2+) as a cofactor.

It is found in the cytoplasm. It carries out the reaction (R)-4'-phosphopantetheine + ATP + H(+) = 3'-dephospho-CoA + diphosphate. The protein operates within cofactor biosynthesis; coenzyme A biosynthesis; CoA from (R)-pantothenate: step 4/5. Reversibly transfers an adenylyl group from ATP to 4'-phosphopantetheine, yielding dephospho-CoA (dPCoA) and pyrophosphate. This Oenococcus oeni (strain ATCC BAA-331 / PSU-1) protein is Phosphopantetheine adenylyltransferase.